The primary structure comprises 299 residues: Ethylmalonyl-CoA decarboxylase (299 aa).

It belongs to the enoyl-CoA hydratase/isomerase family.

The protein resides in the cytoplasm. Its subcellular location is the cytosol. The catalysed reaction is (2S)-ethylmalonyl-CoA + H(+) = butanoyl-CoA + CO2. It carries out the reaction (S)-methylmalonyl-CoA + H(+) = propanoyl-CoA + CO2. The enzyme catalyses (2R)-ethylmalonyl-CoA + H(+) = butanoyl-CoA + CO2. In terms of biological role, decarboxylates ethylmalonyl-CoA, a potentially toxic metabolite, to form butyryl-CoA, suggesting it might be involved in metabolite proofreading. Acts preferentially on (S)-ethylmalonyl-CoA but also has some activity on the (R)-isomer. Also has methylmalonyl-CoA decarboxylase activity at lower level. The polypeptide is Ethylmalonyl-CoA decarboxylase (echdc1) (Xenopus laevis (African clawed frog)).